We begin with the raw amino-acid sequence, 122 residues long: UPF0102 protein DIP1513 (122 aa).

The protein belongs to the UPF0102 family.

This Corynebacterium diphtheriae (strain ATCC 700971 / NCTC 13129 / Biotype gravis) protein is UPF0102 protein DIP1513.